Consider the following 233-residue polypeptide: Ribonuclease 3 (233 aa).

In terms of domain architecture, RNase III spans 4-126 (LNKLMERLGH…IVGAIYIDAG (123 aa)). Mg(2+) is bound at residue Glu-39. Asp-43 is an active-site residue. The Mg(2+) site is built by Asp-112 and Glu-115. Glu-115 is an active-site residue. In terms of domain architecture, DRBM spans 153 to 222 (DAKSLLQEWL…AKRFLELLDD (70 aa)).

Belongs to the ribonuclease III family. As to quaternary structure, homodimer. The cofactor is Mg(2+).

Its subcellular location is the cytoplasm. It carries out the reaction Endonucleolytic cleavage to 5'-phosphomonoester.. In terms of biological role, digests double-stranded RNA. Involved in the processing of primary rRNA transcript to yield the immediate precursors to the large and small rRNAs (23S and 16S). Processes some mRNAs, and tRNAs when they are encoded in the rRNA operon. Processes pre-crRNA and tracrRNA of type II CRISPR loci if present in the organism. The sequence is that of Ribonuclease 3 from Coxiella burnetii (strain CbuK_Q154) (Coxiella burnetii (strain Q154)).